Here is a 3414-residue protein sequence, read N- to C-terminus: Genome polyprotein (3414 aa).

The tract at residues Met1–Arg27 is disordered. The Cytoplasmic segment spans residues Met1 to Thr98. A compositionally biased stretch (basic residues) spans Arg17–Arg27. Positions Thr97 to Ala117 are cleaved as a propeptide — ER anchor for the capsid protein C, removed in mature form by serine protease NS3. The helical transmembrane segment at Ile99–Ala117 threads the bilayer. Over Thr118–Trp242 the chain is Extracellular. A glycan (N-linked (GlcNAc...) asparagine; by host) is linked at Asn144. Residues Lys243–Asp260 form a helical membrane-spanning segment. Position 261 (Gly261) is a topological domain, cytoplasmic. The chain crosses the membrane as a helical span at residues Leu262–Ala280. Residues Ser281 to Thr727 are Extracellular-facing. 6 disulfide bridges follow: Cys283–Cys310, Cys340–Cys396, Cys340–Cys401, Cys354–Cys385, Cys372–Cys396, and Cys372–Cys401. The fusion peptide stretch occupies residues Asp378–Gly391. A glycan (N-linked (GlcNAc...) asparagine; by host) is linked at Asn434. Disulfide bonds link Cys466–Cys570 and Cys587–Cys618. A helical transmembrane segment spans residues Leu728–Gly748. The Cytoplasmic portion of the chain corresponds to Leu749–Thr755. Residues Leu756–Ala776 traverse the membrane as a helical segment. The Extracellular portion of the chain corresponds to Asp777–Tyr1187. Disulfide bonds link Cys780/Cys791, Cys831/Cys920, Cys955/Cys1000, Cys1057/Cys1106, Cys1068/Cys1090, and Cys1089/Cys1093. N-linked (GlcNAc...) asparagine; by host glycosylation is found at Asn861, Asn983, and Asn999. A helical transmembrane segment spans residues Leu1188 to Leu1208. Topologically, residues Leu1209 to Arg1232 are cytoplasmic. Residues Glu1233 to Leu1253 form a helical membrane-spanning segment. Residues Glu1254–Ala1267 lie on the Lumenal side of the membrane. Residues Ile1268–Phe1288 traverse the membrane as a helical segment. The Cytoplasmic portion of the chain corresponds to Met1289–Gly1300. Residues Leu1301–Gly1319 form a helical membrane-spanning segment. Residues Gln1320–Gly1325 lie on the Lumenal side of the membrane. Residues Leu1326–Leu1346 form a helical membrane-spanning segment. Residues Ala1347–Ser1359 are Cytoplasmic-facing. A helical membrane pass occupies residues Phe1360–Met1378. Over Arg1379–Ser1382 the chain is Lumenal. Residues Gln1383–Thr1403 form a helical membrane-spanning segment. Over Arg1404–Ala1454 the chain is Cytoplasmic. Residues Ala1410–Glu1449 form an interacts with and activates NS3 protease region. The helical intramembrane region spans Phe1455–Met1475. At Gly1476–Ala2160 the chain is on the cytoplasmic side. The Peptidase S7 domain maps to Thr1490–Pro1669. Active-site charge relay system; for serine protease NS3 activity residues include His1543, Asp1567, and Ser1627. A Helicase ATP-binding domain is found at Thr1675–Glu1831. ATP is bound at residue Met1688–Thr1695. Positions Asp1779–His1782 match the DEAH box motif. In terms of domain architecture, Helicase C-terminal spans Asp1841–Tyr2000. Lys1883 bears the N6-acetyllysine; by host mark. A helical transmembrane segment spans residues Phe2161 to Phe2181. Over Val2182 to Arg2189 the chain is Lumenal. The segment at residues Met2190–Val2209 is an intramembrane region (helical). Position 2210 (Gly2210) is a topological domain, lumenal. A helical membrane pass occupies residues Tyr2211–Glu2231. The Cytoplasmic segment spans residues Thr2232–Ser2238. The chain crosses the membrane as a helical span at residues Asp2239–Ala2259. The Lumenal portion of the chain corresponds to Asn2260–Pro2296. The helical intramembrane region spans Ala2297–Leu2315. Over His2316–Gly2343 the chain is Lumenal. Positions Thr2344 to Ala2364 form an intramembrane region, helical. Over Thr2365–Ser2368 the chain is Lumenal. Residues Leu2369 to Ala2389 form a helical membrane-spanning segment. Residues Glu2390–Ser2432 lie on the Cytoplasmic side of the membrane. Residues Leu2433 to Val2453 traverse the membrane as a helical segment. Over Thr2454 to Thr2477 the chain is Lumenal. The helical transmembrane segment at Met2478 to Leu2498 threads the bilayer. Over Gly2499 to Phe3414 the chain is Cytoplasmic. The region spanning Gly2512–Ser2776 is the mRNA cap 0-1 NS5-type MT domain. Residue Ser2567 coordinates S-adenosyl-L-methionine. The residue at position 2567 (Ser2567) is a Phosphoserine. Lys2572 acts as the For 2'-O-MTase activity in catalysis. S-adenosyl-L-methionine contacts are provided by Gly2597, Trp2598, Thr2615, Ile2616, Asp2642, and Val2643. Asp2657 functions as the For 2'-O-MTase activity in the catalytic mechanism. Ile2658 lines the S-adenosyl-L-methionine pocket. Catalysis depends on for 2'-O-MTase activity residues Lys2694 and Glu2730. An interaction with host SCRIB region spans residues Glu2730 to Ser2734. Tyr2732 contacts S-adenosyl-L-methionine. Zn(2+)-binding residues include Glu2950, His2954, Cys2959, and Cys2962. In terms of domain architecture, RdRp catalytic spans Gly3040–Ala3189. Zn(2+)-binding residues include His3224, Cys3240, and Cys3359.

The protein in the N-terminal section; belongs to the class I-like SAM-binding methyltransferase superfamily. mRNA cap 0-1 NS5-type methyltransferase family. Homodimer. Interacts (via N-terminus) with host EXOC1 (via C-terminus); this interaction results in EXOC1 degradation through the proteasome degradation pathway. In terms of assembly, forms heterodimers with envelope protein E in the endoplasmic reticulum and Golgi. As to quaternary structure, homodimer; in the endoplasmic reticulum and Golgi. Interacts with protein prM. Interacts with non-structural protein 1. Homodimer; Homohexamer when secreted. Interacts with envelope protein E. In terms of assembly, interacts (via N-terminus) with serine protease NS3. As to quaternary structure, forms a heterodimer with serine protease NS3. May form homooligomers. Forms a heterodimer with NS2B. Interacts with non-structural protein 2A (via N-terminus). Interacts with NS4B. Interacts with unphosphorylated RNA-directed RNA polymerase NS5; this interaction stimulates RNA-directed RNA polymerase NS5 guanylyltransferase activity. In terms of assembly, interacts with serine protease NS3. Interacts with NS1. As to quaternary structure, homodimer. Interacts with host STAT2; this interaction inhibits the phosphorylation of the latter, and, when all viral proteins are present (polyprotein), targets STAT2 for degradation. Interacts with serine protease NS3. Interacts with host SCRIB; this interaction targets NS5 to the cell membrane periphery and nucleus, thereby allowing efficient host nuclear STAT1 inhibition. Post-translationally, specific enzymatic cleavages in vivo yield mature proteins. Cleavages in the lumen of endoplasmic reticulum are performed by host signal peptidase, whereas cleavages in the cytoplasmic side are performed by serine protease NS3. Signal cleavage at the 2K-4B site requires a prior NS3 protease-mediated cleavage at the 4A-2K site. In terms of processing, cleaved in post-Golgi vesicles by a host furin, releasing the mature small envelope protein M, and peptide pr. This cleavage is incomplete as up to 30% of viral particles still carry uncleaved prM. N-glycosylated. Post-translationally, N-glycosylated. The excreted form is glycosylated and this is required for efficient secretion of the protein from infected cells. In terms of processing, acetylated by host KAT5. Acetylation modulates NS3 RNA-binding and unwinding activities and plays an important positive role for viral replication. Phosphorylated on serines residues. This phosphorylation may trigger NS5 nuclear localization.

The protein localises to the virion. Its subcellular location is the host nucleus. It is found in the host cytoplasm. The protein resides in the host perinuclear region. It localises to the secreted. The protein localises to the virion membrane. Its subcellular location is the host endoplasmic reticulum membrane. The catalysed reaction is Selective hydrolysis of -Xaa-Xaa-|-Yaa- bonds in which each of the Xaa can be either Arg or Lys and Yaa can be either Ser or Ala.. The enzyme catalyses RNA(n) + a ribonucleoside 5'-triphosphate = RNA(n+1) + diphosphate. It carries out the reaction a ribonucleoside 5'-triphosphate + H2O = a ribonucleoside 5'-diphosphate + phosphate + H(+). It catalyses the reaction ATP + H2O = ADP + phosphate + H(+). The catalysed reaction is a 5'-end (5'-triphosphoguanosine)-ribonucleoside in mRNA + S-adenosyl-L-methionine = a 5'-end (N(7)-methyl 5'-triphosphoguanosine)-ribonucleoside in mRNA + S-adenosyl-L-homocysteine. The enzyme catalyses a 5'-end (N(7)-methyl 5'-triphosphoguanosine)-ribonucleoside in mRNA + S-adenosyl-L-methionine = a 5'-end (N(7)-methyl 5'-triphosphoguanosine)-(2'-O-methyl-ribonucleoside) in mRNA + S-adenosyl-L-homocysteine + H(+). In terms of biological role, plays a role in virus budding by binding to membrane and gathering the viral RNA into a nucleocapsid that forms the core of a mature virus particle. During virus entry, may induce genome penetration in host cytoplasm after hemifusion induced by surface proteins. Can migrate to the cell nucleus where it modulates host functions. Inhibits RNA silencing by interfering with host Dicer. Functionally, prevents premature fusion activity of envelope proteins in trans-Golgi by binding to envelope protein E at pH6.0. After virion release in extracellular space gets dissociated from E dimers. Its function is as follows. Acts as a chaperone for envelope protein E during intracellular virion assembly by masking and inactivating envelope protein E fusion peptide. prM is the only viral peptide matured by host furin in the trans-Golgi network. Presumably to avoid catastrophic activation of the viral fusion activity in acidic GolGi compartment prior to virion release. prM-E cleavage is ineficient, and many virions are only partially matured. These uncleaved prM would play a role in immune evasion. In terms of biological role, may play a role in virus budding. Exerts cytotoxic effects by activating a mitochondrial apoptotic pathway through M extodomain. May display a viroporin activity. Binds to host cell surface receptor and mediates fusion between viral and cellular membranes. Envelope protein is synthesized in the endoplasmic reticulum in the form of heterodimer with protein prM. They play a role in virion budding in the ER, and the newly formed immature particle is covered with 60 spikes composed of heterodimer between precursor prM and envelope protein E. The virion is transported to the Golgi apparatus where the low pH causes dissociation of PrM-E heterodimers and formation of E homodimers. prM-E cleavage is ineficient, and many virions are only partially matured. These uncleaved prM would play a role in immune evasion. Functionally, involved in immune evasion, pathogenesis and viral replication. Once cleaved off the polyprotein, is targeted to three destinations: the viral replication cycle, the plasma membrane and the extracellular compartment. Essential for viral replication. Required for formation of the replication complex and recruitment of other non-structural proteins to the ER-derived membrane structures. Excreted as a hexameric lipoparticle that plays a role against host immune response. Antagonizing the complement function. Binds to the host macrophages and dendritic cells. Inhibits signal transduction originating from Toll-like receptor 3 (TLR3). Its function is as follows. Component of the viral RNA replication complex that functions in virion assembly and antagonizes the host immune response. In terms of biological role, required cofactor for the serine protease function of NS3. May have membrane-destabilizing activity and form viroporins. Displays three enzymatic activities: serine protease, NTPase and RNA helicase. NS3 serine protease, in association with NS2B, performs its autocleavage and cleaves the polyprotein at dibasic sites in the cytoplasm: C-prM, NS2A-NS2B, NS2B-NS3, NS3-NS4A, NS4A-2K and NS4B-NS5. NS3 RNA helicase binds RNA and unwinds dsRNA in the 3' to 5' direction. Functionally, regulates the ATPase activity of the NS3 helicase activity. NS4A allows NS3 helicase to conserve energy during unwinding. Its function is as follows. Functions as a signal peptide for NS4B and is required for the interferon antagonism activity of the latter. In terms of biological role, induces the formation of ER-derived membrane vesicles where the viral replication takes place. Inhibits interferon (IFN)-induced host STAT1 phosphorylation and nuclear translocation, thereby preventing the establishment of cellular antiviral state by blocking the IFN-alpha/beta pathway. Inhibits STAT2 translocation in the nucleus after IFN-alpha treatment. Replicates the viral (+) and (-) genome, and performs the capping of genomes in the cytoplasm. NS5 methylates viral RNA cap at guanine N-7 and ribose 2'-O positions. Besides its role in genome replication, also prevents the establishment of cellular antiviral state by blocking the interferon-alpha/beta (IFN-alpha/beta) signaling pathway. Inhibits host TYK2 and STAT2 phosphorylation, thereby preventing activation of JAK-STAT signaling pathway. This Homo sapiens (Human) protein is Genome polyprotein.